A 401-amino-acid chain; its full sequence is Phosphoglycerate kinase (401 aa).

Substrate is bound by residues 29 to 31, Arg45, 69 to 72, Arg125, and Arg158; these read DFN and HLGR. ATP-binding positions include Lys209, Glu331, and 357–360; that span reads GGDT.

This sequence belongs to the phosphoglycerate kinase family. As to quaternary structure, monomer.

Its subcellular location is the cytoplasm. The catalysed reaction is (2R)-3-phosphoglycerate + ATP = (2R)-3-phospho-glyceroyl phosphate + ADP. It participates in carbohydrate degradation; glycolysis; pyruvate from D-glyceraldehyde 3-phosphate: step 2/5. The sequence is that of Phosphoglycerate kinase from Wolinella succinogenes (strain ATCC 29543 / DSM 1740 / CCUG 13145 / JCM 31913 / LMG 7466 / NCTC 11488 / FDC 602W) (Vibrio succinogenes).